A 250-amino-acid polypeptide reads, in one-letter code: Ribosomal RNA small subunit methyltransferase J (250 aa).

S-adenosyl-L-methionine is bound by residues 101–102 (RD), 117–118 (ER), 153–154 (SS), and D171.

The protein belongs to the methyltransferase superfamily. RsmJ family.

The protein resides in the cytoplasm. It carries out the reaction guanosine(1516) in 16S rRNA + S-adenosyl-L-methionine = N(2)-methylguanosine(1516) in 16S rRNA + S-adenosyl-L-homocysteine + H(+). Its function is as follows. Specifically methylates the guanosine in position 1516 of 16S rRNA. This is Ribosomal RNA small subunit methyltransferase J from Shigella boydii serotype 18 (strain CDC 3083-94 / BS512).